We begin with the raw amino-acid sequence, 554 residues long: MNIYIFSKEKKRKKVVCDNLSKTRGSRREHCEPHRRRMGQSTSKFRRSKTTFTSPVLPNLREQNSGADEPYDYISNLPDECLSLIFQSLTCADLKRCSLVCRRWLTIEGQCRHRLSLKAQSDLISVIPSLFTRFDSVTKLVLRSDRRSLGICDNAFVMISVRCRNLTRLKLRGCPEISDLGIIGFTENCRSLKKVSFGSCGFGVKGMNALLNTCLGLEELSVKRLRGIGAGAELIGPGGAAGSLKVICLKELHNGQCFAPLLSGAKGLRILKIFRCSGDWDRVFEAVRDKVNAIVEIHLERIQMSDLGLTALSKCSGVEVLHLVKTPDCTNVGLALVAERCKLLRKLHIDGWKTNRIGDEGLIVVAKYCWNLQELVLIGVNPTKLSLEAIVSNCLNLERLALCGSDTVGDTELCCIAEKCLALRKLCIKNCPITDDGIKALGNGCPNLLKVKVKKCRGVTTQGADLLRKRRALLVVNLDAPETPIVEGSVGEGGAQENAVEFPPSRLQIPTIGLASGSTSRSSSFKLRLGFLSQRNFVSCALRRLGSRSRSRNE.

The region spanning 71 to 117 (YDYISNLPDECLSLIFQSLTCADLKRCSLVCRRWLTIEGQCRHRLSL) is the F-box domain. LRR repeat units follow at residues 119–144 (AQSD…VLRS), 148–173 (SLGI…KLRG), 174–199 (CPEI…SFGS), 205–224 (KGMN…SVKR), 250–275 (KELH…KIFR), 301–325 (RIQM…HLVK), 326–351 (TPDC…HIDG), 354–379 (TNRI…VLIG), 383–404 (TKLS…ALCG), 405–428 (SDTV…KLCI), 430–455 (NCPI…KVKK), and 456–480 (CRGV…NLDA).

The polypeptide is Putative F-box/LRR-repeat protein 8 (FBL8) (Arabidopsis thaliana (Mouse-ear cress)).